Here is a 274-residue protein sequence, read N- to C-terminus: Large ribosomal subunit protein uL2 (274 aa).

2 disordered regions span residues 28–54 (APHA…TRHI) and 224–274 (VAMN…RRRK). Residues 263–274 (KRTDKMIVRRRK) show a composition bias toward basic and acidic residues.

It belongs to the universal ribosomal protein uL2 family. As to quaternary structure, part of the 50S ribosomal subunit. Forms a bridge to the 30S subunit in the 70S ribosome.

In terms of biological role, one of the primary rRNA binding proteins. Required for association of the 30S and 50S subunits to form the 70S ribosome, for tRNA binding and peptide bond formation. It has been suggested to have peptidyltransferase activity; this is somewhat controversial. Makes several contacts with the 16S rRNA in the 70S ribosome. The polypeptide is Large ribosomal subunit protein uL2 (Pseudomonas fluorescens (strain SBW25)).